A 246-amino-acid chain; its full sequence is UDP-N-acetyl-D-mannosaminuronic acid transferase (246 aa).

This sequence belongs to the glycosyltransferase 26 family.

The enzyme catalyses UDP-N-acetyl-alpha-D-mannosaminouronate + N-acetyl-alpha-D-glucosaminyl-di-trans,octa-cis-undecaprenyl diphosphate = beta-D-ManNAcA-(1-&gt;4)-alpha-D-GlcNAc-di-trans,octa-cis-undecaprenyl diphosphate + UDP + H(+). It functions in the pathway bacterial outer membrane biogenesis; enterobacterial common antigen biosynthesis. Its function is as follows. Catalyzes the synthesis of Und-PP-GlcNAc-ManNAcA (Lipid II), the second lipid-linked intermediate involved in enterobacterial common antigen (ECA) synthesis. The sequence is that of UDP-N-acetyl-D-mannosaminuronic acid transferase from Yersinia pseudotuberculosis serotype IB (strain PB1/+).